We begin with the raw amino-acid sequence, 124 residues long: Small ribosomal subunit protein eS6 (124 aa).

The protein belongs to the eukaryotic ribosomal protein eS6 family.

The chain is Small ribosomal subunit protein eS6 from Methanococcus maripaludis (strain DSM 14266 / JCM 13030 / NBRC 101832 / S2 / LL).